We begin with the raw amino-acid sequence, 433 residues long: Sensor protein RstB (433 aa).

Over 1 to 3 (MKK) the chain is Cytoplasmic. Residues 4 to 24 (LFIQFYLLLFVCFLVMSLLVG) traverse the membrane as a helical segment. Residues 25–135 (LVYKFTAERA…PYLYYLHQMR (111 aa)) lie on the Periplasmic side of the membrane. Residues 136–156 (LLDIALIAFIAISLAFPVFIW) traverse the membrane as a helical segment. The Cytoplasmic portion of the chain corresponds to 157-433 (MRPHWQDMLK…WHNIPQFTSA (277 aa)). In terms of domain architecture, HAMP spans 158-210 (RPHWQDMLKLEAAAQRFGDGHLNERIHFDEGSSFERLGVAFNQMADNINALIA). Residues 218-425 (GIAHELRTPL…RFSFSWPLWH (208 aa)) form the Histidine kinase domain. His-276 carries the post-translational modification Phosphohistidine; by autocatalysis.

Autophosphorylated.

Its subcellular location is the cell inner membrane. The catalysed reaction is ATP + protein L-histidine = ADP + protein N-phospho-L-histidine.. Its function is as follows. Member of the two-component regulatory system RstB/RstA. RstB functions as a membrane-associated protein kinase that phosphorylates RstA. The sequence is that of Sensor protein RstB (rstB) from Escherichia coli (strain K12).